Consider the following 433-residue polypeptide: Glutamate-1-semialdehyde 2,1-aminomutase (433 aa).

An N6-(pyridoxal phosphate)lysine modification is found at Lys-273.

This sequence belongs to the class-III pyridoxal-phosphate-dependent aminotransferase family. HemL subfamily. In terms of assembly, homodimer. Requires pyridoxal 5'-phosphate as cofactor.

It localises to the cytoplasm. It carries out the reaction (S)-4-amino-5-oxopentanoate = 5-aminolevulinate. It functions in the pathway porphyrin-containing compound metabolism; protoporphyrin-IX biosynthesis; 5-aminolevulinate from L-glutamyl-tRNA(Glu): step 2/2. It participates in porphyrin-containing compound metabolism; chlorophyll biosynthesis. In Crocosphaera subtropica (strain ATCC 51142 / BH68) (Cyanothece sp. (strain ATCC 51142)), this protein is Glutamate-1-semialdehyde 2,1-aminomutase.